Reading from the N-terminus, the 213-residue chain is Protein Pars_0011 (213 aa).

Positions 8-201 constitute an AMMECR1 domain; the sequence is EEGRYLVKLA…EREPNEEVYQ (194 aa).

The protein is Protein Pars_0011 of Pyrobaculum arsenaticum (strain DSM 13514 / JCM 11321 / PZ6).